Here is a 160-residue protein sequence, read N- to C-terminus: MRGLKKKRRIQIIAIAAVALTIATIMIGTAMRDGINFFRSPSEVAEAPPPESEVFRIGGLVEEGTLVRGESETTTFMVTDGGASIPVSYTGVLPDLFGENEGTVALGSMQNGVFMATEVLARHDETYMPKEVVDALKEQGVYKDPNATDADGGYGGASGS.

At 1–9 (MRGLKKKRR) the chain is on the cytoplasmic side. A helical; Signal-anchor for type II membrane protein transmembrane segment spans residues 10 to 30 (IQIIAIAAVALTIATIMIGTA). Residues 31-160 (MRDGINFFRS…DGGYGGASGS (130 aa)) are Periplasmic-facing. Heme-binding residues include H123 and Y127. Residues 141 to 160 (VYKDPNATDADGGYGGASGS) are disordered.

It belongs to the CcmE/CycJ family.

It is found in the cell inner membrane. Heme chaperone required for the biogenesis of c-type cytochromes. Transiently binds heme delivered by CcmC and transfers the heme to apo-cytochromes in a process facilitated by CcmF and CcmH. In Dinoroseobacter shibae (strain DSM 16493 / NCIMB 14021 / DFL 12), this protein is Cytochrome c-type biogenesis protein CcmE.